Consider the following 475-residue polypeptide: Ribulose bisphosphate carboxylase large chain (475 aa).

The propeptide occupies 1–2 (MS). The residue at position 3 (Pro3) is an N-acetylproline. Lys14 bears the N6,N6,N6-trimethyllysine mark. 2 residues coordinate substrate: Asn123 and Thr173. Catalysis depends on Lys175, which acts as the Proton acceptor. Substrate is bound at residue Lys177. Mg(2+)-binding residues include Lys201, Asp203, and Glu204. Lys201 carries the post-translational modification N6-carboxylysine. Catalysis depends on His294, which acts as the Proton acceptor. Residues Arg295, His327, and Ser379 each coordinate substrate.

Belongs to the RuBisCO large chain family. Type I subfamily. As to quaternary structure, heterohexadecamer of 8 large chains and 8 small chains; disulfide-linked. The disulfide link is formed within the large subunit homodimers. The cofactor is Mg(2+). In terms of processing, the disulfide bond which can form in the large chain dimeric partners within the hexadecamer appears to be associated with oxidative stress and protein turnover.

It localises to the plastid. Its subcellular location is the chloroplast. The catalysed reaction is 2 (2R)-3-phosphoglycerate + 2 H(+) = D-ribulose 1,5-bisphosphate + CO2 + H2O. The enzyme catalyses D-ribulose 1,5-bisphosphate + O2 = 2-phosphoglycolate + (2R)-3-phosphoglycerate + 2 H(+). In terms of biological role, ruBisCO catalyzes two reactions: the carboxylation of D-ribulose 1,5-bisphosphate, the primary event in carbon dioxide fixation, as well as the oxidative fragmentation of the pentose substrate in the photorespiration process. Both reactions occur simultaneously and in competition at the same active site. The protein is Ribulose bisphosphate carboxylase large chain of Eucalyptus globulus subsp. globulus (Tasmanian blue gum).